Consider the following 449-residue polypeptide: Probable mitochondrial chaperone bcs1 (449 aa).

At 1-20 (MDNIGAADAATSSGISGLLS) the chain is on the mitochondrial intermembrane side. Residues 21–41 (GNSFLGAGIGLMGFGAGLAIL) traverse the membrane as a helical segment. The Mitochondrial matrix portion of the chain corresponds to 42–449 (RRGLISGASL…FNVHRKSLSV (408 aa)). 249-256 (GPPGSGKT) serves as a coordination point for ATP.

The protein belongs to the AAA ATPase family. BCS1 subfamily.

It is found in the mitochondrion inner membrane. The catalysed reaction is ATP + H2O = ADP + phosphate + H(+). In terms of biological role, chaperone necessary for the incorporation of Rieske iron-sulfur protein rip1 into the mitochondrial respiratory chain complex III. This Schizosaccharomyces pombe (strain 972 / ATCC 24843) (Fission yeast) protein is Probable mitochondrial chaperone bcs1.